Here is a 119-residue protein sequence, read N- to C-terminus: Immunoglobulin lambda variable 2-11 (119 aa).

The N-terminal stretch at 1–19 is a signal peptide; it reads MAWALLLLSLLTQGTGSWA. Position 20 is a pyrrolidone carboxylic acid (Gln20). A framework-1 region spans residues 20–44; it reads QSALTQPRSVSGSPGQSVTISCTGT. Positions 20 to 119 constitute an Ig-like domain; that stretch reads QSALTQPRSV…CSYAGSYTFH (100 aa). A disulfide bridge connects residues Cys41 and Cys109. The tract at residues 45-53 is complementarity-determining-1; the sequence is SSDVGGYNY. Positions 54 to 70 are framework-2; it reads VSWYQQHPGKAPKLMIY. Positions 71-73 are complementarity-determining-2; that stretch reads DVS. The interval 74–109 is framework-3; that stretch reads KRPSGVPDRFSGSKSGNTASLTISGLQAEDEADYYC. Residues 110-119 form a complementarity-determining-3 region; the sequence is CSYAGSYTFH.

Immunoglobulins are composed of two identical heavy chains and two identical light chains; disulfide-linked.

The protein localises to the secreted. It is found in the cell membrane. Functionally, v region of the variable domain of immunoglobulin light chains that participates in the antigen recognition. Immunoglobulins, also known as antibodies, are membrane-bound or secreted glycoproteins produced by B lymphocytes. In the recognition phase of humoral immunity, the membrane-bound immunoglobulins serve as receptors which, upon binding of a specific antigen, trigger the clonal expansion and differentiation of B lymphocytes into immunoglobulins-secreting plasma cells. Secreted immunoglobulins mediate the effector phase of humoral immunity, which results in the elimination of bound antigens. The antigen binding site is formed by the variable domain of one heavy chain, together with that of its associated light chain. Thus, each immunoglobulin has two antigen binding sites with remarkable affinity for a particular antigen. The variable domains are assembled by a process called V-(D)-J rearrangement and can then be subjected to somatic hypermutations which, after exposure to antigen and selection, allow affinity maturation for a particular antigen. The chain is Immunoglobulin lambda variable 2-11 from Homo sapiens (Human).